A 157-amino-acid polypeptide reads, in one-letter code: Small ribosomal subunit protein uS7 (157 aa).

Belongs to the universal ribosomal protein uS7 family. Part of the 30S ribosomal subunit. Contacts proteins S9 and S11.

One of the primary rRNA binding proteins, it binds directly to 16S rRNA where it nucleates assembly of the head domain of the 30S subunit. Is located at the subunit interface close to the decoding center, probably blocks exit of the E-site tRNA. The protein is Small ribosomal subunit protein uS7 of Leptospira biflexa serovar Patoc (strain Patoc 1 / Ames).